The chain runs to 339 residues: Fe-S cluster assembly protein DRE2 (339 aa).

An N-terminal SAM-like domain region spans residues 1-157 (MTRILLLLHP…KKLSSTHAAV (157 aa)). Residues 158 to 206 (GLTDTSASNTDEENDDVNSKRKLQETKLAYFSESDDEDEEDQIIDENNL) are linker. Positions 221, 233, 236, and 238 each coordinate [2Fe-2S] cluster. Residues 221-238 (CELPNGKKRRKACKDCTC) form a fe-S binding site A region. 4 residues coordinate [4Fe-4S] cluster: cysteine 302, cysteine 305, cysteine 313, and cysteine 316. 2 short sequence motifs (cx2C motif) span residues 302–305 (CSSC) and 313–316 (CDGC). The segment at 302–316 (CSSCSLGDAFRCDGC) is fe-S binding site B.

The protein belongs to the anamorsin family. As to quaternary structure, monomer. Interacts with TAH18. Interacts with MIA40. It depends on [2Fe-2S] cluster as a cofactor. The cofactor is [4Fe-4S] cluster.

Its subcellular location is the cytoplasm. The protein localises to the mitochondrion intermembrane space. Component of the cytosolic iron-sulfur (Fe-S) protein assembly (CIA) machinery required for the maturation of extramitochondrial Fe-S proteins. Part of an electron transfer chain functioning in an early step of cytosolic Fe-S biogenesis, facilitating the de novo assembly of a [4Fe-4S] cluster on the scaffold complex CFD1-NBP35. Electrons are transferred to DRE2 from NADPH via the FAD- and FMN-containing protein TAH18. TAH18-DRE2 are also required for the assembly of the diferric tyrosyl radical cofactor of ribonucleotide reductase (RNR), probably by providing electrons for reduction during radical cofactor maturation in the catalytic small subunit RNR2. This chain is Fe-S cluster assembly protein DRE2, found in Debaryomyces hansenii (strain ATCC 36239 / CBS 767 / BCRC 21394 / JCM 1990 / NBRC 0083 / IGC 2968) (Yeast).